We begin with the raw amino-acid sequence, 512 residues long: MNSKDSNTVPVYTTNTGCPIFNPMAAARVGKGGPVLLQDSHLIDVFQHFDRERIPERVVHAKGSGAFGEFECTDDITKYTKHTMFSKVGKKTPMVARFSTVGGERGTPDTARDPRGFALKFYTDEGIFDMVGNNTPVFFLRDPAKFPLFIHTQKRNPQNDMKDATMFWDYLSQNAESIHQVMILFSDLGGTPYSYRFMDGFSSHTYKFVNDKGEFYYCKWHFITNQGTKGLTNEEAAALDGSNPDHARQDLFEAIERGDYPSWTLYVQVMTPQEAEKYRYNIFDLTKVWPHKDVPMQRVGRFTLNQNPTNFFADIEQAGFSPSHMVPGIEVSADPVLQVRTFSYPDTHRHRLGANFEQIPVNSPKCPVFNYSRDGPMNVNGNQGNWPNYPSSIRPLAKVQYEPDEGHEKWVGQVTYHMDEITDVDFEQPRAFWQNVLGKKPGQQDNFVKNVAGHLSGAISPVRERQYGVFTRVDSELGRRIREATEAEVKKMEEKAPKPINKGEPHMFQGSS.

Catalysis depends on residues H60 and N133. Residue Y344 coordinates heme. A Phosphoserine modification is found at S363. The span at 488–505 shows a compositional bias: basic and acidic residues; that stretch reads EVKKMEEKAPKPINKGEP. Positions 488–512 are disordered; it reads EVKKMEEKAPKPINKGEPHMFQGSS.

The protein belongs to the catalase family. The cofactor is heme.

The protein localises to the peroxisome matrix. It catalyses the reaction 2 H2O2 = O2 + 2 H2O. Functionally, catalyzes the degradation of hydrogen peroxide (H(2)O(2)) generated by peroxisomal oxidases to water and oxygen, thereby protecting cells from the toxic effects of hydrogen peroxide. The protein is Catalase (cta1) of Schizosaccharomyces pombe (strain 972 / ATCC 24843) (Fission yeast).